The following is a 186-amino-acid chain: Shikimate kinase (186 aa).

15–20 (GAGKTT) is a binding site for ATP. Threonine 19 contributes to the Mg(2+) binding site. Substrate is bound by residues aspartate 37, arginine 61, and glycine 83. An ATP-binding site is contributed by arginine 121. Arginine 140 is a binding site for substrate.

This sequence belongs to the shikimate kinase family. As to quaternary structure, monomer. Mg(2+) is required as a cofactor.

Its subcellular location is the cytoplasm. The enzyme catalyses shikimate + ATP = 3-phosphoshikimate + ADP + H(+). The protein operates within metabolic intermediate biosynthesis; chorismate biosynthesis; chorismate from D-erythrose 4-phosphate and phosphoenolpyruvate: step 5/7. Catalyzes the specific phosphorylation of the 3-hydroxyl group of shikimic acid using ATP as a cosubstrate. This is Shikimate kinase from Psychrobacter arcticus (strain DSM 17307 / VKM B-2377 / 273-4).